Consider the following 817-residue polypeptide: Protein Jade-3 (817 aa).

A disordered region spans residues 1 to 38 (MKRLRNLSSSDSSDNESPSTSFSSCFQHKGKGKCTADD). The segment covering 8–24 (SSSDSSDNESPSTSFSS) has biased composition (low complexity). A PHD-type 1 zinc finger spans residues 202–252 (DVICDVCRSPDSEEGNDMVFCDRCNICVHQACYGILKVPEGSWLCRTCVLG). The segment at 254–288 (HPQCILCPKTGGAMKATRTGTKWAHVSCALWIPEV) adopts a C2HC pre-PHD-type zinc-finger fold. A PHD-type 2 zinc finger spans residues 312 to 368 (LVCSLCKLKTGACIQCSVKSCITAFHVTCAFEHSLEMKTILDEGDEVKFKSYCLKHS). 3 disordered regions span residues 375 to 396 (ISEQ…SERT), 665 to 689 (NGVL…QNSE), and 719 to 817 (LVRT…SVQR). Basic and acidic residues predominate over residues 379 to 396 (EEPHKTHSDNRPTESERT). Positions 667 to 689 (VLSSGDRTQRDSSSQTSPGQNSE) are enriched in polar residues. The segment covering 722-743 (TTEDLRSSEKPQRRQSVKERLW) has biased composition (basic and acidic residues). Over residues 747-758 (PADTQTSGTPYQ) the composition is skewed to polar residues. The segment covering 777–799 (DENKDHMLLRRNSRESPNRDSCR) has biased composition (basic and acidic residues). A compositionally biased stretch (basic residues) spans 801 to 810 (SRIRGKRKMT).

Belongs to the JADE family. As to quaternary structure, component of the HBO1 complex.

In terms of biological role, scaffold subunit of some HBO1 complexes, which have a histone H4 acetyltransferase activity. This chain is Protein Jade-3 (jade3), found in Xenopus tropicalis (Western clawed frog).